A 313-amino-acid chain; its full sequence is Protein FixB (313 aa).

FAD is bound at residue 255-283 (LYLAVGISGQIQHMVGANASQTIFAINKD).

Belongs to the ETF alpha-subunit/FixB family. Heterodimer of FixA and FixB.

Its pathway is amine and polyamine metabolism; carnitine metabolism. Functionally, required for anaerobic carnitine reduction. May bring reductant to CaiA. In Escherichia coli O8 (strain IAI1), this protein is Protein FixB.